A 144-amino-acid polypeptide reads, in one-letter code: Universal stress protein F (144 aa).

It belongs to the universal stress protein A family. As to quaternary structure, homodimer.

This is Universal stress protein F (uspF) from Escherichia coli (strain K12).